Consider the following 82-residue polypeptide: Defensin-like protein 75 (82 aa).

A signal peptide spans methionine 1 to alanine 26. 4 disulfides stabilise this stretch: cysteine 33–cysteine 66, cysteine 37–cysteine 55, cysteine 41–cysteine 64, and cysteine 45–cysteine 65.

Belongs to the DEFL family.

Its subcellular location is the secreted. This is Defensin-like protein 75 (LCR45) from Arabidopsis thaliana (Mouse-ear cress).